Here is a 118-residue protein sequence, read N- to C-terminus: Small ribosomal subunit protein bS6 (118 aa).

Residues 98–118 are disordered; sequence TAAPAAKVAPVETAPAAEAAE. Residues 99–118 are compositionally biased toward low complexity; sequence AAPAAKVAPVETAPAAEAAE.

The protein belongs to the bacterial ribosomal protein bS6 family.

In terms of biological role, binds together with bS18 to 16S ribosomal RNA. The protein is Small ribosomal subunit protein bS6 of Geobacter metallireducens (strain ATCC 53774 / DSM 7210 / GS-15).